The sequence spans 353 residues: Fe(3+) ions import ATP-binding protein FbpC (353 aa).

The 231-residue stretch at 9–239 (VTFENVTKKF…PASAFIADFM (231 aa)) folds into the ABC transporter domain. 41 to 48 (GPSGCGKT) serves as a coordination point for ATP.

It belongs to the ABC transporter superfamily. Fe(3+) ion importer (TC 3.A.1.10) family. As to quaternary structure, the complex is composed of two ATP-binding proteins (FbpC), two transmembrane proteins (FbpB) and a solute-binding protein (FbpA).

It localises to the cell inner membrane. The catalysed reaction is Fe(3+)(out) + ATP + H2O = Fe(3+)(in) + ADP + phosphate + H(+). Part of the ABC transporter complex FbpABC involved in Fe(3+) ions import. Responsible for energy coupling to the transport system. The chain is Fe(3+) ions import ATP-binding protein FbpC from Brucella suis biovar 1 (strain 1330).